Reading from the N-terminus, the 466-residue chain is MKTTVEKLSPTRTKLTISVTPEELQPSIKHAYEHIAGQVNIPGFRKGKVPPAIIDQRVGKEAVLEHAVNEGLDGFYRLAVEENEVRPLGRPEADISEWPNEKDFSGDLLLTIEVDVRPEITLPAFDGITLTVEAAQVTPDDVEEELDRLRSRFCTLVTVDRPAKKGDFAQIDLVAEIGGEEVDTAANISYEIGSGELIEGIDEALDTLTAGETTTFEAPLMGGDHEGENAQITVTLNAVKERELPEADDDFAQISSEFDTIGELRESLRGQVERAKSFGQGTAARDQLVEKLLELVEIPVPAQLVEDEVSRHLEQESRLEDDEHRAEVTESSEKTFRTQILLDEIAQRENVKVSQDELTQYLVQGAAQYNMDPNEFVKILGENGQISSMVGEIARNKALAIVLGKAEVVDTNGKQVDLTEFVALPDDGEAVDEDATPEDTDAPAEEAPAAEKPKKKAAAKKKAADK.

The region spanning 166–245 (GDFAQIDLVA…LNAVKERELP (80 aa)) is the PPIase FKBP-type domain. Disordered regions lie at residues 313–332 (LEQESRLEDDEHRAEVTESS) and 424–466 (LPDD…AADK). A compositionally biased stretch (acidic residues) spans 426-444 (DDGEAVDEDATPEDTDAPA). The span at 453–466 (PKKKAAAKKKAADK) shows a compositional bias: basic residues.

The protein belongs to the FKBP-type PPIase family. Tig subfamily.

It localises to the cytoplasm. It carries out the reaction [protein]-peptidylproline (omega=180) = [protein]-peptidylproline (omega=0). Functionally, involved in protein export. Acts as a chaperone by maintaining the newly synthesized protein in an open conformation. Functions as a peptidyl-prolyl cis-trans isomerase. This Leifsonia xyli subsp. xyli (strain CTCB07) protein is Trigger factor.